Here is a 150-residue protein sequence, read N- to C-terminus: Protein adenylyltransferase MntA (150 aa).

Positions 32–46 (GSRATGNINANSDWD) match the GSX(10)DXD motif motif. Active-site residues include Asp44 and Asp46. The Mg(2+) site is built by Asp44, Asp46, and Asp86.

Belongs to the MntA antitoxin family. Forms a complex with HepT, probably MntA(1):HepT(2) in vivo; can only be purified when both 'Arg-102' and 'Tyr-109' (or 'His-107' and 'Tyr-109') of HepThave been mutated. The fully di-AMPylated HepT homodimer is not found in a complex with MntA. The cofactor is Mg(2+).

The enzyme catalyses L-tyrosyl-[protein] + ATP = O-(5'-adenylyl)-L-tyrosyl-[protein] + diphosphate. It catalyses the reaction O-(5'-adenylyl)-L-tyrosyl-[protein] + ATP = O-[5'-(adenylyl-(5'-&gt;3')-adenylyl)]-L-tyrosyl-[protein] + diphosphate. In terms of biological role, antitoxin component of a type VII toxin-antitoxin (TA) system. Upon cloning in E.coli neutralizes the effect of cognate toxin HepT. Neutralization is mostly due to di-AMPylation of toxin by this enzyme. Successively di-AMPylates HepT on 'Tyr-109'. In vitro will use ATP, dATP, GTP, dGTP, TTP or UTP to generate a mono-modified protein, but requires a purine nucleotide for the second modification reaction (ATP, dATP or GTP). This chain is Protein adenylyltransferase MntA, found in Aphanizomenon flos-aquae (strain 2012/KM1/D3).